The primary structure comprises 268 residues: Nickel import ATP-binding protein NikE (268 aa).

The region spanning 4–252 is the ABC transporter domain; sequence LNVSDLSHHY…SSDAGRVLQN (249 aa). 45–52 is an ATP binding site; the sequence is GRSGCGKS.

This sequence belongs to the ABC transporter superfamily. Nickel importer (TC 3.A.1.5.3) family. The complex is composed of two ATP-binding proteins (NikD and NikE), two transmembrane proteins (NikB and NikC) and a solute-binding protein (NikA).

Its subcellular location is the cell inner membrane. The enzyme catalyses Ni(2+)(out) + ATP + H2O = Ni(2+)(in) + ADP + phosphate + H(+). Part of the ABC transporter complex NikABCDE involved in nickel import. Responsible for energy coupling to the transport system. The protein is Nickel import ATP-binding protein NikE of Shigella dysenteriae serotype 1 (strain Sd197).